The sequence spans 406 residues: CCA-adding enzyme (406 aa).

ATP contacts are provided by glycine 32 and arginine 35. Glycine 32 and arginine 35 together coordinate CTP. Positions 45 and 47 each coordinate Mg(2+). Residues arginine 116, aspartate 159, arginine 162, arginine 165, and arginine 168 each coordinate ATP. CTP is bound by residues arginine 116, aspartate 159, arginine 162, arginine 165, and arginine 168.

Belongs to the tRNA nucleotidyltransferase/poly(A) polymerase family. Bacterial CCA-adding enzyme type 3 subfamily. As to quaternary structure, homodimer. Mg(2+) serves as cofactor.

It catalyses the reaction a tRNA precursor + 2 CTP + ATP = a tRNA with a 3' CCA end + 3 diphosphate. The enzyme catalyses a tRNA with a 3' CCA end + 2 CTP + ATP = a tRNA with a 3' CCACCA end + 3 diphosphate. In terms of biological role, catalyzes the addition and repair of the essential 3'-terminal CCA sequence in tRNAs without using a nucleic acid template. Adds these three nucleotides in the order of C, C, and A to the tRNA nucleotide-73, using CTP and ATP as substrates and producing inorganic pyrophosphate. tRNA 3'-terminal CCA addition is required both for tRNA processing and repair. Also involved in tRNA surveillance by mediating tandem CCA addition to generate a CCACCA at the 3' terminus of unstable tRNAs. While stable tRNAs receive only 3'-terminal CCA, unstable tRNAs are marked with CCACCA and rapidly degraded. The protein is CCA-adding enzyme of Enterococcus faecalis (strain ATCC 700802 / V583).